Here is a 276-residue protein sequence, read N- to C-terminus: E3 ubiquitin-protein ligase CCNB1IP1 (276 aa).

An RING-type; atypical zinc finger spans residues 10-52; sequence CNYRKCRIKLSGYAWVTACSHIFCDQHGSGEFSRSPAICPACN. Residues 146–182 adopt a coiled-coil conformation; that stretch reads MKKVLEEYKKKFSDISEKLMERNRQYQKLQGLYDSLR.

As to quaternary structure, interacts with CCNB1, UBE2L3 and NF2. Post-translationally, ubiquitinated; autoubiquitinated. Phosphorylated by CDK1 on serine or threonine residues (in vitro). As to expression, expressed predominantly in the testes and 17 day embryos (corresponding to prophase I in females). Weakly or not expressed in other tissues.

Its subcellular location is the nucleus. It localises to the chromosome. The enzyme catalyses S-ubiquitinyl-[E2 ubiquitin-conjugating enzyme]-L-cysteine + [acceptor protein]-L-lysine = [E2 ubiquitin-conjugating enzyme]-L-cysteine + N(6)-ubiquitinyl-[acceptor protein]-L-lysine.. The protein operates within protein modification; protein ubiquitination. Functionally, ubiquitin E3 ligase that acts as a limiting factor for crossing-over during meiosis: required during zygonema to limit the colocalization of RNF212 with MutS-gamma-associated recombination sites and thereby establish early differentiation of crossover and non-crossover sites. Later, it is directed by MutL-gamma to stably accumulate at designated crossover sites. Probably promotes the dissociation of RNF212 and MutS-gamma to allow the progression of recombination and the implementation of the final steps of crossing over. Modulates cyclin-B levels and participates in the regulation of cell cycle progression through the G2 phase. Overexpression causes delayed entry into mitosis. This chain is E3 ubiquitin-protein ligase CCNB1IP1 (Ccnb1ip1), found in Mus musculus (Mouse).